The sequence spans 575 residues: Isocitrate dehydrogenase kinase/phosphatase (575 aa).

Residues 315-321 (APGIRGM) and lysine 336 contribute to the ATP site. Aspartate 371 is a catalytic residue.

It belongs to the AceK family.

It is found in the cytoplasm. It carries out the reaction L-seryl-[isocitrate dehydrogenase] + ATP = O-phospho-L-seryl-[isocitrate dehydrogenase] + ADP + H(+). Bifunctional enzyme which can phosphorylate or dephosphorylate isocitrate dehydrogenase (IDH) on a specific serine residue. This is a regulatory mechanism which enables bacteria to bypass the Krebs cycle via the glyoxylate shunt in response to the source of carbon. When bacteria are grown on glucose, IDH is fully active and unphosphorylated, but when grown on acetate or ethanol, the activity of IDH declines drastically concomitant with its phosphorylation. This is Isocitrate dehydrogenase kinase/phosphatase from Citrobacter koseri (strain ATCC BAA-895 / CDC 4225-83 / SGSC4696).